The chain runs to 338 residues: Ketol-acid reductoisomerase (NADP(+)) (338 aa).

The region spanning 2-182 (TKMYYEEDTD…GGARAGVLET (181 aa)) is the KARI N-terminal Rossmann domain. Residues 25-28 (YGSQ), S51, S53, and 83-86 (DELQ) contribute to the NADP(+) site. H108 is a catalytic residue. G134 is a binding site for NADP(+). The KARI C-terminal knotted domain maps to 183–330 (TFRTETETDL…SEIRKLYCWN (148 aa)). Mg(2+)-binding residues include D191, E195, E227, and E231. Substrate is bound at residue S252.

It belongs to the ketol-acid reductoisomerase family. It depends on Mg(2+) as a cofactor.

The catalysed reaction is (2R)-2,3-dihydroxy-3-methylbutanoate + NADP(+) = (2S)-2-acetolactate + NADPH + H(+). It carries out the reaction (2R,3R)-2,3-dihydroxy-3-methylpentanoate + NADP(+) = (S)-2-ethyl-2-hydroxy-3-oxobutanoate + NADPH + H(+). It functions in the pathway amino-acid biosynthesis; L-isoleucine biosynthesis; L-isoleucine from 2-oxobutanoate: step 2/4. Its pathway is amino-acid biosynthesis; L-valine biosynthesis; L-valine from pyruvate: step 2/4. Functionally, involved in the biosynthesis of branched-chain amino acids (BCAA). Catalyzes an alkyl-migration followed by a ketol-acid reduction of (S)-2-acetolactate (S2AL) to yield (R)-2,3-dihydroxy-isovalerate. In the isomerase reaction, S2AL is rearranged via a Mg-dependent methyl migration to produce 3-hydroxy-3-methyl-2-ketobutyrate (HMKB). In the reductase reaction, this 2-ketoacid undergoes a metal-dependent reduction by NADPH to yield (R)-2,3-dihydroxy-isovalerate. The protein is Ketol-acid reductoisomerase (NADP(+)) of Clostridium botulinum (strain Eklund 17B / Type B).